The sequence spans 95 residues: Cell division protein FtsB (95 aa).

The Cytoplasmic portion of the chain corresponds to 1-3; sequence MKW. The chain crosses the membrane as a helical span at residues 4–21; sequence VTGLLVVLLLGLQYKLWI. The Periplasmic segment spans residues 22-95; that stretch reads GEGSVAEVWQ…QVVGRPGETP (74 aa). Positions 26–73 form a coiled coil; that stretch reads VAEVWQLRQTLEAQRAENEELRYRNAALDAEVTDLKTGLDAIEERARR.

Belongs to the FtsB family. Part of a complex composed of FtsB, FtsL and FtsQ.

It localises to the cell inner membrane. In terms of biological role, essential cell division protein. May link together the upstream cell division proteins, which are predominantly cytoplasmic, with the downstream cell division proteins, which are predominantly periplasmic. This Thioalkalivibrio sulfidiphilus (strain HL-EbGR7) protein is Cell division protein FtsB.